Consider the following 1275-residue polypeptide: ATP-dependent helicase/nuclease subunit A (1275 aa).

The UvrD-like helicase ATP-binding domain maps to 4–481; it reads PKWTKEQLEV…IMLYKNFRSR (478 aa). 25–32 lines the ATP pocket; it reads AAAGSGKT. Residues 531–839 enclose the UvrD-like helicase C-terminal domain; that stretch reads TEIHLIQKDN…RIMSIHKSKG (309 aa).

This sequence belongs to the helicase family. AddA subfamily. As to quaternary structure, heterodimer of AddA and AddB/RexB. It depends on Mg(2+) as a cofactor.

The catalysed reaction is Couples ATP hydrolysis with the unwinding of duplex DNA by translocating in the 3'-5' direction.. It carries out the reaction ATP + H2O = ADP + phosphate + H(+). Its function is as follows. The heterodimer acts as both an ATP-dependent DNA helicase and an ATP-dependent, dual-direction single-stranded exonuclease. Recognizes the chi site generating a DNA molecule suitable for the initiation of homologous recombination. The AddA nuclease domain is required for chi fragment generation; this subunit has the helicase and 3' -&gt; 5' nuclease activities. This chain is ATP-dependent helicase/nuclease subunit A, found in Clostridioides difficile (strain 630) (Peptoclostridium difficile).